The following is a 216-amino-acid chain: Large ribosomal subunit protein uL1y (216 aa).

The protein belongs to the universal ribosomal protein uL1 family. Interacts with the GTPase NUG2.

The protein is Large ribosomal subunit protein uL1y (RPL10AB) of Arabidopsis thaliana (Mouse-ear cress).